The following is a 194-amino-acid chain: Anthranilate synthase component 2 (194 aa).

One can recognise a Glutamine amidotransferase type-1 domain in the interval 2–194 (KIFFIDNFDS…QSVGFLRELS (193 aa)). Residue 57–59 (GPG) coordinates L-glutamine. Residue Cys84 is the Nucleophile; for GATase activity of the active site. Residues Gln88 and 134 to 135 (SL) contribute to the L-glutamine site. Active-site for GATase activity residues include His170 and Glu172.

As to quaternary structure, heterotetramer consisting of two non-identical subunits: a beta subunit (TrpG) and a large alpha subunit (TrpE).

It carries out the reaction chorismate + L-glutamine = anthranilate + pyruvate + L-glutamate + H(+). Its pathway is amino-acid biosynthesis; L-tryptophan biosynthesis; L-tryptophan from chorismate: step 1/5. In terms of biological role, part of a heterotetrameric complex that catalyzes the two-step biosynthesis of anthranilate, an intermediate in the biosynthesis of L-tryptophan. In the first step, the glutamine-binding beta subunit (TrpG) of anthranilate synthase (AS) provides the glutamine amidotransferase activity which generates ammonia as a substrate that, along with chorismate, is used in the second step, catalyzed by the large alpha subunit of AS (TrpE) to produce anthranilate. In the absence of TrpG, TrpE can synthesize anthranilate directly from chorismate and high concentrations of ammonia. This chain is Anthranilate synthase component 2 (trpG), found in Helicobacter pylori (strain J99 / ATCC 700824) (Campylobacter pylori J99).